The primary structure comprises 265 residues: Type 1 encapsulin shell protein (265 aa).

Residues 79–81, tryptophan 87, and 90–94 contribute to the FMN site; these read RAT and DNLER. A pore-forming loop region spans residues 184 to 189; sequence EAGHYP. Residue glutamate 235 participates in FMN binding.

It belongs to the encapsulin family. Family 1 subfamily. As to quaternary structure, homomultimeric. This encapsulin nanocompartment is formed by 60 subunits; monomers form 12 pentamers which assemble to form shells. There are 12 pores where the pentamers meet as well as 3-fold axis channels and dimer channels; none are larger than 3-4 Angstroms in diameter. The N-terminus of the protein is inside the shell, the C-terminus is outside. Probably 3, 4 or 5 Flp cargo decamers bind inside the encapulin nanocompartment. FMN is required as a cofactor.

The protein localises to the encapsulin nanocompartment. Its activity is regulated as follows. Proteolysis activated by calcium and cobalt. In terms of biological role, shell component of a type 1 encapsulin nanocompartment. Assembles into proteinaceous shells 23-24 nm in diameter with 2-2.5 nm thick walls. Cargo protein Flp (ferritin-like protein, probably stores iron) is targeted to the interior via its C-terminal extension; empty intact shells can be isolated in the absence of cargo protein. Fe(2+) may be able to pass though the 5-fold and dimer channels in the protein shell. Functionally, protease that exhibits activity toward chymotrypsin and trypsin substrates. Probably does not have antibacterial activity. This chain is Type 1 encapsulin shell protein, found in Thermotoga maritima (strain ATCC 43589 / DSM 3109 / JCM 10099 / NBRC 100826 / MSB8).